We begin with the raw amino-acid sequence, 654 residues long: MSASSHHDLHSKLSLGGILVTLGIIYGDIGTSPLYVMKSIIGLHTIKPEVVLGGISAIFWTLTLQTTLKYVLITLSADNHGEGGIFALYALVKRTKVKWLIIPAIIGGSALLADGIITPPVSVASAVEGVRTYYPDINTVPIVIAILVVLFTIQQFGTKLVGKFFAPMMMIWFAMLAILGILQITQNTSVLCAVNPYYAYKLLSIHPDGFYVLGFVFLCTTGAEALYSDMGHCGRKNIRISWIFVKIALLLNYFGQGAYLIKHAGHTLKSINANNGNPFYLVMPEWFQPFGIVISTMAAVIASQALISGSFTLINEAMRLNFWPKVKIKYPTDLKGQIYIPSINWLLLAGCIGIVLHFEESSKMEAAYGLAIVLCMIMTTILLTYFMILKRISWFIIAPLILLYLVIEFSFLIANLDKFPHGGYVTLIIASALTFIMSIWYTAKKISKNYTKIVKIQTYKKVLAELSVDLSIPKYATHLVYMTNANRVDEIEEKVMYSILQKRPKRADLYWFIHINITNEPYKKEYKVTEIIKNDLFRIDFNLGFREPTKINLMFKEVIKDMVAKGEVDITSRYESLSKNNIIGDFKFVLSEKFLSNDSFMHWHEKLVMNTYFFFKKMSLSEEQAFGLDSSSVKVEKFPMVLHAPEKIELCRIK.

The next 13 helical transmembrane spans lie at 17 to 37 (GILVTLGIIYGDIGTSPLYVM), 40 to 60 (IIGLHTIKPEVVLGGISAIFW), 71 to 91 (VLITLSADNHGEGGIFALYAL), 99 to 119 (WLIIPAIIGGSALLADGIITP), 137 to 157 (INTVPIVIAILVVLFTIQQFG), 164 to 184 (FFAPMMMIWFAMLAILGILQI), 202 to 222 (LLSIHPDGFYVLGFVFLCTTG), 240 to 260 (ISWIFVKIALLLNYFGQGAYL), 281 to 301 (LVMPEWFQPFGIVISTMAAVI), 338 to 358 (IYIPSINWLLLAGCIGIVLHF), 369 to 389 (GLAIVLCMIMTTILLTYFMIL), 394 to 414 (WFIIAPLILLYLVIEFSFLIA), and 423 to 443 (GYVTLIIASALTFIMSIWYTA).

The protein belongs to the HAK/KUP transporter (TC 2.A.72) family.

The protein resides in the cell inner membrane. It carries out the reaction K(+)(in) + H(+)(in) = K(+)(out) + H(+)(out). In terms of biological role, transport of potassium into the cell. Likely operates as a K(+):H(+) symporter. The protein is Probable potassium transport system protein Kup of Flavobacterium psychrophilum (strain ATCC 49511 / DSM 21280 / CIP 103535 / JIP02/86).